Reading from the N-terminus, the 104-residue chain is UPF0145 protein GTNG_1265 (104 aa).

This sequence belongs to the UPF0145 family.

This Geobacillus thermodenitrificans (strain NG80-2) protein is UPF0145 protein GTNG_1265.